A 376-amino-acid chain; its full sequence is Erythronate-4-phosphate dehydrogenase (376 aa).

Substrate contacts are provided by serine 45 and threonine 67. Position 147 (aspartate 147) interacts with NAD(+). Arginine 209 is an active-site residue. Aspartate 233 contributes to the NAD(+) binding site. The active site involves glutamate 238. Histidine 255 acts as the Proton donor in catalysis. NAD(+) is bound at residue glycine 258. Tyrosine 259 serves as a coordination point for substrate.

Belongs to the D-isomer specific 2-hydroxyacid dehydrogenase family. PdxB subfamily. In terms of assembly, homodimer.

The protein resides in the cytoplasm. The enzyme catalyses 4-phospho-D-erythronate + NAD(+) = (R)-3-hydroxy-2-oxo-4-phosphooxybutanoate + NADH + H(+). It functions in the pathway cofactor biosynthesis; pyridoxine 5'-phosphate biosynthesis; pyridoxine 5'-phosphate from D-erythrose 4-phosphate: step 2/5. In terms of biological role, catalyzes the oxidation of erythronate-4-phosphate to 3-hydroxy-2-oxo-4-phosphonooxybutanoate. The sequence is that of Erythronate-4-phosphate dehydrogenase from Shewanella sp. (strain MR-4).